Reading from the N-terminus, the 124-residue chain is Fluoride-specific ion channel FluC 1 (124 aa).

The next 4 helical transmembrane spans lie at 4 to 24, 36 to 56, 67 to 87, and 103 to 123; these read VLIG…GAWI, GTFA…GLVV, VVLG…LLDL, and AALS…LGWG. Na(+)-binding residues include Gly-75 and Thr-78.

This sequence belongs to the fluoride channel Fluc/FEX (TC 1.A.43) family.

The protein localises to the cell membrane. The enzyme catalyses fluoride(in) = fluoride(out). Its activity is regulated as follows. Na(+) is not transported, but it plays an essential structural role and its presence is essential for fluoride channel function. In terms of biological role, fluoride-specific ion channel. Important for reducing fluoride concentration in the cell, thus reducing its toxicity. This chain is Fluoride-specific ion channel FluC 1, found in Symbiobacterium thermophilum (strain DSM 24528 / JCM 14929 / IAM 14863 / T).